Reading from the N-terminus, the 428-residue chain is C4-dicarboxylate transport protein (428 aa).

8 helical membrane-spanning segments follow: residues 8-28, 44-64, 78-98, 148-168, 184-204, 222-242, 307-327, and 355-375; these read VLYV…HLYP, LIKM…IAGM, LLYF…ATHI, GEIL…AHLG, VLFG…FGAM, LIGT…GAIA, IYMT…LTWM, and AATL…ILGI.

It belongs to the dicarboxylate/amino acid:cation symporter (DAACS) (TC 2.A.23) family.

Its subcellular location is the cell inner membrane. Functionally, responsible for the transport of dicarboxylates such as succinate, fumarate, and malate from the periplasm across the membrane. The chain is C4-dicarboxylate transport protein from Burkholderia thailandensis (strain ATCC 700388 / DSM 13276 / CCUG 48851 / CIP 106301 / E264).